The sequence spans 318 residues: NADH-ubiquinone oxidoreductase chain 1 (318 aa).

The next 8 helical transmembrane spans lie at 3-23 (FVNL…LTLL), 68-88 (LILF…MWIP), 102-122 (ILFM…SGWA), 146-166 (LAII…STLI), 171-191 (HIWL…STLA), 222-242 (LFFL…TILF), 253-273 (EMYT…FLWI), and 294-314 (LPLT…LASI).

Belongs to the complex I subunit 1 family.

The protein localises to the mitochondrion inner membrane. The catalysed reaction is a ubiquinone + NADH + 5 H(+)(in) = a ubiquinol + NAD(+) + 4 H(+)(out). Core subunit of the mitochondrial membrane respiratory chain NADH dehydrogenase (Complex I) that is believed to belong to the minimal assembly required for catalysis. Complex I functions in the transfer of electrons from NADH to the respiratory chain. The immediate electron acceptor for the enzyme is believed to be ubiquinone. This Nyctalus plancyi velutinus (Fine-haired noctule) protein is NADH-ubiquinone oxidoreductase chain 1 (MT-ND1).